The following is a 445-amino-acid chain: MAQSHSSSINYFGSANKVVYEGKDSTNPLAFKYYNPQEVIGGKTLKEHLRFSIAYWHTFTADGTDVFGAATMQRPWDHYKGMDLAKMRVEAAFEMFEKLDAPFFAFHDRDIAPEGSTLKETNQNLDMIMGMIKDYMRNSGVKLLWNTANMFTNPRFVHGAATSCNADVFAYAAAQVKKGLETAKELGAENYVFWGGREGYETLLNTDLKFELDNLARFMHMAVDYAKEIGYTGQFLIEPKPKEPTTHQYDTDAATTIAFLKQYGLDNHFKLNLEANHATLAGHTFEHELRMARVHGLLGSVDANQGHPLLGWDTDEFPTDLYSTTLAMYEILQNGGLGSGGLNFDAKVRRSSFEPDDLIYAHIAGMDAFARGLKVAHKLIEDRVFEDVIQHRYRSFTEGIGLEIIEGRANFHTLEQYALNHKSIKNESGRQEKLKAILNQYILEV.

Catalysis depends on residues H107 and D110. 7 residues coordinate Mg(2+): E238, E274, H277, D302, D313, D315, and D345.

Belongs to the xylose isomerase family. As to quaternary structure, homotetramer. The cofactor is Mg(2+).

The protein resides in the cytoplasm. The catalysed reaction is alpha-D-xylose = alpha-D-xylulofuranose. The chain is Xylose isomerase (xylA) from Bacillus subtilis (strain 168).